Consider the following 100-residue polypeptide: Urease subunit gamma (100 aa).

The protein belongs to the urease gamma subunit family. Heterotrimer of UreA (gamma), UreB (beta) and UreC (alpha) subunits. Three heterotrimers associate to form the active enzyme.

It localises to the cytoplasm. The catalysed reaction is urea + 2 H2O + H(+) = hydrogencarbonate + 2 NH4(+). Its pathway is nitrogen metabolism; urea degradation; CO(2) and NH(3) from urea (urease route): step 1/1. The polypeptide is Urease subunit gamma (Polynucleobacter asymbioticus (strain DSM 18221 / CIP 109841 / QLW-P1DMWA-1) (Polynucleobacter necessarius subsp. asymbioticus)).